The sequence spans 464 residues: NAD(P) transhydrogenase subunit beta (464 aa).

Transmembrane regions (helical) follow at residues 54–74 (VQAY…GTVI), 86–106 (LVAA…TGAL), 126–146 (VEMS…VIAF), 164–184 (HPLN…FAAT), 191–211 (FALM…IGGA), and 227–247 (AAAG…GALV). Residues 316–317 (YG), 348–353 (VAGRMP), 390–394 (GANDV), 425–432 (KRSMASGY), and 451–452 (DA) contribute to the NADP(+) site.

This sequence belongs to the PNT beta subunit family. In terms of assembly, complex of an alpha and a beta chain; in Rhodospirillum, the alpha chain seems to be made of two subunits.

The protein localises to the cell inner membrane. It carries out the reaction NAD(+) + NADPH + H(+)(in) = NADH + NADP(+) + H(+)(out). In terms of biological role, the transhydrogenation between NADH and NADP is coupled to respiration and ATP hydrolysis and functions as a proton pump across the membrane. This chain is NAD(P) transhydrogenase subunit beta (pntB), found in Rhodospirillum rubrum (strain ATCC 11170 / ATH 1.1.1 / DSM 467 / LMG 4362 / NCIMB 8255 / S1).